Here is an 81-residue protein sequence, read N- to C-terminus: Acyl carrier protein (81 aa).

Positions 4-79 (AEIKDKVYDI…QAIDYIVNKK (76 aa)) constitute a Carrier domain. An O-(pantetheine 4'-phosphoryl)serine modification is found at S39.

Belongs to the acyl carrier protein (ACP) family. 4'-phosphopantetheine is transferred from CoA to a specific serine of apo-ACP by AcpS. This modification is essential for activity because fatty acids are bound in thioester linkage to the sulfhydryl of the prosthetic group.

The protein resides in the cytoplasm. It functions in the pathway lipid metabolism; fatty acid biosynthesis. Functionally, carrier of the growing fatty acid chain in fatty acid biosynthesis. This chain is Acyl carrier protein, found in Chlorobaculum tepidum (strain ATCC 49652 / DSM 12025 / NBRC 103806 / TLS) (Chlorobium tepidum).